The following is a 504-amino-acid chain: Maturase K (504 aa).

The protein belongs to the intron maturase 2 family. MatK subfamily.

It localises to the plastid. Its subcellular location is the chloroplast. Functionally, usually encoded in the trnK tRNA gene intron. Probably assists in splicing its own and other chloroplast group II introns. The protein is Maturase K of Capsella bursa-pastoris (Shepherd's purse).